The sequence spans 534 residues: Putative ammonium transporter 1 (534 aa).

The next 11 membrane-spanning stretches (helical) occupy residues 31 to 51 (SFFLCSMALIIFFMQCGFAYL), 69 to 89 (LLDSCICIIGYWAIGWALAYG), 115 to 135 (FFFQYVFSATAATIVSGAVAE), 139 to 159 (FITYVTYCTVISTFIYPVLTH), 184 to 204 (FAGSGLVHLCGGSISFLAAWI), 223 to 243 (ILGHSVPFTALGGFILMFGFL), 263 to 283 (ALAMINTILSGAFAALIYLGV), 291 to 311 (WTLLLTINACLSGMVAACAGC), 318 to 338 (ACIWVGLGAGLIYLAFSKLMI), 346 to 366 (LDAFAVHAGGGFWGLMSSSII), and 401 to 421 (ICALAIIAWSLGVMLPIFWIL).

The protein belongs to the ammonia transporter channel (TC 1.A.11.2) family.

The protein resides in the membrane. Involved in the uptake of ammonia. This Caenorhabditis elegans protein is Putative ammonium transporter 1 (amt-1).